The primary structure comprises 189 residues: Glycerol-3-phosphate acyltransferase (189 aa).

Transmembrane regions (helical) follow at residues 1 to 21 (MVWL…AVLL), 50 to 70 (KLAI…VLVA), 72 to 92 (WLGL…IGHL), 111 to 131 (MLLG…LLTF), and 151 to 171 (LLAW…GLIV).

This sequence belongs to the PlsY family. As to quaternary structure, probably interacts with PlsX.

It is found in the cell inner membrane. It carries out the reaction an acyl phosphate + sn-glycerol 3-phosphate = a 1-acyl-sn-glycero-3-phosphate + phosphate. The protein operates within lipid metabolism; phospholipid metabolism. Functionally, catalyzes the transfer of an acyl group from acyl-phosphate (acyl-PO(4)) to glycerol-3-phosphate (G3P) to form lysophosphatidic acid (LPA). This enzyme utilizes acyl-phosphate as fatty acyl donor, but not acyl-CoA or acyl-ACP. The protein is Glycerol-3-phosphate acyltransferase of Pseudomonas aeruginosa (strain LESB58).